Consider the following 197-residue polypeptide: UDP-N-acetylglucosamine transferase subunit ALG13 (197 aa).

Belongs to the glycosyltransferase 28 family. In terms of assembly, heterodimer with ALG14 to form a functional enzyme.

The protein resides in the endoplasmic reticulum. The enzyme catalyses an N-acetyl-alpha-D-glucosaminyl-diphospho-di-trans,poly-cis-dolichol + UDP-N-acetyl-alpha-D-glucosamine = an N,N'-diacetylchitobiosyl-diphospho-di-trans,poly-cis-dolichol + UDP + H(+). Functionally, involved in protein N-glycosylation. Essential for the second step of the dolichol-linked oligosaccharide pathway. This Kluyveromyces lactis (strain ATCC 8585 / CBS 2359 / DSM 70799 / NBRC 1267 / NRRL Y-1140 / WM37) (Yeast) protein is UDP-N-acetylglucosamine transferase subunit ALG13 (ALG13).